Consider the following 264-residue polypeptide: Small ribosomal subunit protein uS2 (264 aa).

It belongs to the universal ribosomal protein uS2 family.

This chain is Small ribosomal subunit protein uS2, found in Helicobacter pylori (strain P12).